We begin with the raw amino-acid sequence, 143 residues long: Large ribosomal subunit protein uL11 (143 aa).

Belongs to the universal ribosomal protein uL11 family. In terms of assembly, part of the ribosomal stalk of the 50S ribosomal subunit. Interacts with L10 and the large rRNA to form the base of the stalk. L10 forms an elongated spine to which L12 dimers bind in a sequential fashion forming a multimeric L10(L12)X complex. One or more lysine residues are methylated.

Functionally, forms part of the ribosomal stalk which helps the ribosome interact with GTP-bound translation factors. This is Large ribosomal subunit protein uL11 from Kineococcus radiotolerans (strain ATCC BAA-149 / DSM 14245 / SRS30216).